We begin with the raw amino-acid sequence, 204 residues long: Vacuolar protein-sorting-associated protein 46 (204 aa).

Residues 1–103 (MSRNSAAGLE…ASMGQVCKGM (103 aa)) are interaction with VSP24. Serine 5 bears the Phosphoserine mark. Coiled-coil stretches lie at residues 9 to 56 (LENT…RIYA) and 109 to 129 (NMNL…FEDL). The tract at residues 104–204 (DKALQNMNLQ…LAQRLRALRG (101 aa)) is interaction with VSP4. Positions 176–204 (NVPEIKAKEVNVDDEKEDKLAQRLRALRG) are interaction with VTA1. The span at 185–196 (VNVDDEKEDKLA) shows a compositional bias: basic and acidic residues. Residues 185–204 (VNVDDEKEDKLAQRLRALRG) form a disordered region.

This sequence belongs to the SNF7 family. As to quaternary structure, self-associates. Interacts with VPS4 and VTA1. Interacts with IST1.

The protein localises to the endosome membrane. The protein resides in the endomembrane system. Its function is as follows. Class E VPS protein implicated in concentration and sorting of cargo proteins of the multivesicular body (MVB) for incorporation into intralumenal vesicles. The lumenal sequestrated membrane proteins will be targeted into the vacuole after fusion of the endosome with the vacuole. Probably acts as a peripherally associated component of the ESCRT-III complex, which appears to be critical for late steps in MVB sorting, such as membrane invagination and final cargo sorting and recruits late-acting components of the sorting machinery. The MVB pathway requires the sequential function of ESCRT-O, -I,-II and -III complex assemblies. Regulates the membrane association of VPS4. Can stimulate VPS4 ATPase activity directly or via VTA1. The chain is Vacuolar protein-sorting-associated protein 46 (DID2) from Saccharomyces cerevisiae (strain ATCC 204508 / S288c) (Baker's yeast).